The following is a 581-amino-acid chain: 2-succinyl-5-enolpyruvyl-6-hydroxy-3-cyclohexene-1-carboxylate synthase (581 aa).

It belongs to the TPP enzyme family. MenD subfamily. In terms of assembly, homodimer. Mg(2+) is required as a cofactor. It depends on Mn(2+) as a cofactor. Requires thiamine diphosphate as cofactor.

The catalysed reaction is isochorismate + 2-oxoglutarate + H(+) = 5-enolpyruvoyl-6-hydroxy-2-succinyl-cyclohex-3-ene-1-carboxylate + CO2. It participates in quinol/quinone metabolism; 1,4-dihydroxy-2-naphthoate biosynthesis; 1,4-dihydroxy-2-naphthoate from chorismate: step 2/7. Its pathway is cofactor biosynthesis; phylloquinone biosynthesis. Catalyzes the thiamine diphosphate-dependent decarboxylation of 2-oxoglutarate and the subsequent addition of the resulting succinic semialdehyde-thiamine pyrophosphate anion to isochorismate to yield 2-succinyl-5-enolpyruvyl-6-hydroxy-3-cyclohexene-1-carboxylate (SEPHCHC). The protein is 2-succinyl-5-enolpyruvyl-6-hydroxy-3-cyclohexene-1-carboxylate synthase of Gloeothece citriformis (strain PCC 7424) (Cyanothece sp. (strain PCC 7424)).